The chain runs to 231 residues: MTDNDDRIKLEASWKEALREEFDKPYMKQLGEFLRQEKAAGKAIFPPGPLIFNALNTTPLENVKVVIIGQDPYHGPGQAHGLCFSVQPGVPTPPSLQNIYKELNRDLNIPIPNNGYLQRWAEQGVLLLNTSLTVEQAKAGSHANAGWQPFTDRVIEVVNERCERLVFLLWGSHAQSKQKLIDPQRHLILKSAHPSPLSAYRGFLGNGHFSRTNKFLEQNGKTPIDWSLPDL.

The Proton acceptor role is filled by Asp-71.

Belongs to the uracil-DNA glycosylase (UDG) superfamily. UNG family.

The protein resides in the cytoplasm. The catalysed reaction is Hydrolyzes single-stranded DNA or mismatched double-stranded DNA and polynucleotides, releasing free uracil.. In terms of biological role, excises uracil residues from the DNA which can arise as a result of misincorporation of dUMP residues by DNA polymerase or due to deamination of cytosine. The polypeptide is Uracil-DNA glycosylase (Pseudomonas aeruginosa (strain UCBPP-PA14)).